The sequence spans 514 residues: 2,3-bisphosphoglycerate-independent phosphoglycerate mutase (514 aa).

Mn(2+) contacts are provided by aspartate 13 and serine 63. Residue serine 63 is the Phosphoserine intermediate of the active site. Substrate-binding positions include histidine 124, 154–155, arginine 186, arginine 192, 258–261, and lysine 332; these read RD and RADR. Mn(2+)-binding residues include aspartate 399, histidine 403, aspartate 440, histidine 441, and histidine 459.

The protein belongs to the BPG-independent phosphoglycerate mutase family. In terms of assembly, monomer. The cofactor is Mn(2+).

It catalyses the reaction (2R)-2-phosphoglycerate = (2R)-3-phosphoglycerate. It functions in the pathway carbohydrate degradation; glycolysis; pyruvate from D-glyceraldehyde 3-phosphate: step 3/5. In terms of biological role, catalyzes the interconversion of 2-phosphoglycerate and 3-phosphoglycerate. The chain is 2,3-bisphosphoglycerate-independent phosphoglycerate mutase from Legionella pneumophila (strain Lens).